A 116-amino-acid chain; its full sequence is UPF0127 protein PF1050 (116 aa).

This sequence belongs to the UPF0127 family.

The chain is UPF0127 protein PF1050 from Pyrococcus furiosus (strain ATCC 43587 / DSM 3638 / JCM 8422 / Vc1).